The following is a 474-amino-acid chain: MDVADSTSETPPVFDHDNLALAAQTNLLQFYLTHLASTLVPPMKLDMRDSMTPSFSQTESPNSETDDSTSAANKVLFSILGTPTTDSTSNAVSKSSSKLCSVCGDKSTGLHYGAATCEGCKGFFKRSVQNKKVYHCSQDNCCEIDKQNRNRCQSCRFRKCISKGMLTEAVREDRMPGGRNGNSIYSNYKQRRSIIRKTKDYVEEQERRPFQSLPSGKKLIKELVEMDCLDRLINLKGLRINPSANCDIAPACKRLTRIGDEIVEQLVEWTKTLPFFDELPVEAHTHLLTQRWAELVLLSAGYYACSVFTPDSPDTTEMIDETDEISFTNPQVNLRLLQNRLSLVLGKEIPLEHVAKEAGPLVTRFTTLLHSFSNLKVSPEAYVCIKAITLLHLSADSTLDRSIIDKVNTLQDHFVKTLQIHLHQPGEDAQTTSLAQILDWLPDLRNASSVLLHSKMFYVPFLLCKNPRRLVFDE.

The tract at residues 50 to 69 is disordered; that stretch reads SMTPSFSQTESPNSETDDST. Residues 51-69 show a composition bias toward polar residues; that stretch reads MTPSFSQTESPNSETDDST. Residues 97–172 constitute a DNA-binding region (nuclear receptor); the sequence is SKLCSVCGDK…KGMLTEAVRE (76 aa). NR C4-type zinc fingers lie at residues 100-120 and 136-155; these read CSVCGDKSTGLHYGAATCEGC and CSQDNCCEIDKQNRNRCQSC. An NR LBD domain is found at 215–474; it reads SGKKLIKELV…KNPRRLVFDE (260 aa).

The protein belongs to the nuclear hormone receptor family.

The protein resides in the nucleus. In terms of biological role, orphan nuclear receptor. This Caenorhabditis elegans protein is Nuclear hormone receptor family member nhr-91 (nhr-91).